Reading from the N-terminus, the 441-residue chain is Na(+)/H(+) antiporter NhaA 2 (441 aa).

A run of 12 helical transmembrane segments spans residues 34–54 (VGGA…NSPW), 77–97 (LTLG…VVGL), 115–135 (ALPM…FVAV), 146–166 (GWAI…AVIS), 176–196 (FLLT…AVFY), 199–219 (EINL…ALCV), 225–245 (SWWL…ESGV), 249–269 (VAGV…AGGP), 290–310 (VAVP…VSGL), 317–337 (PITL…IFLT), 355–375 (WIDV…SLLI), and 389–409 (FVKV…AVLL).

The protein belongs to the NhaA Na(+)/H(+) (TC 2.A.33) antiporter family.

The protein localises to the cell membrane. It carries out the reaction Na(+)(in) + 2 H(+)(out) = Na(+)(out) + 2 H(+)(in). Its function is as follows. Na(+)/H(+) antiporter that extrudes sodium in exchange for external protons. The protein is Na(+)/H(+) antiporter NhaA 2 of Mycobacterium sp. (strain MCS).